The following is a 201-amino-acid chain: Superoxide dismutase [Mn] (201 aa).

Mn(2+) contacts are provided by histidine 27, histidine 81, aspartate 163, and histidine 167.

The protein belongs to the iron/manganese superoxide dismutase family. Homodimer. Mn(2+) is required as a cofactor.

The protein resides in the secreted. The catalysed reaction is 2 superoxide + 2 H(+) = H2O2 + O2. In terms of biological role, destroys superoxide anion radicals which are normally produced within the cells and which are toxic to biological systems. This chain is Superoxide dismutase [Mn] (sodA), found in Streptococcus pyogenes serotype M3 (strain ATCC BAA-595 / MGAS315).